We begin with the raw amino-acid sequence, 343 residues long: Proto-oncogene serine/threonine-protein kinase mos (343 aa).

Positions 63–339 (VCLMHRLGSG…LLQRDLKAFR (277 aa)) constitute a Protein kinase domain. Residues 69 to 77 (LGSGGFGSV) and Lys-90 each bind ATP. Asp-198 acts as the Proton acceptor in catalysis.

It belongs to the protein kinase superfamily. Ser/Thr protein kinase family. In terms of assembly, interacts with MAP2K1/MEK1.

It is found in the cytoplasm. It carries out the reaction L-seryl-[protein] + ATP = O-phospho-L-seryl-[protein] + ADP + H(+). The enzyme catalyses L-threonyl-[protein] + ATP = O-phospho-L-threonyl-[protein] + ADP + H(+). In terms of biological role, serine/threonine kinase involved in the regulation of MAPK signaling. Is an activator of the ERK1/2 signaling cascade playing an essential role in the stimulation of oocyte maturation. The sequence is that of Proto-oncogene serine/threonine-protein kinase mos from Mus musculus (Mouse).